A 178-amino-acid chain; its full sequence is Ribosome maturation factor RimP (178 aa).

It belongs to the RimP family.

It localises to the cytoplasm. Required for maturation of 30S ribosomal subunits. The sequence is that of Ribosome maturation factor RimP from Streptococcus pyogenes serotype M4 (strain MGAS10750).